We begin with the raw amino-acid sequence, 141 residues long: Large ribosomal subunit protein uL11 (141 aa).

This sequence belongs to the universal ribosomal protein uL11 family. Part of the ribosomal stalk of the 50S ribosomal subunit. Interacts with L10 and the large rRNA to form the base of the stalk. L10 forms an elongated spine to which L12 dimers bind in a sequential fashion forming a multimeric L10(L12)X complex. One or more lysine residues are methylated.

In terms of biological role, forms part of the ribosomal stalk which helps the ribosome interact with GTP-bound translation factors. The polypeptide is Large ribosomal subunit protein uL11 (Acaryochloris marina (strain MBIC 11017)).